The sequence spans 32 residues: Protamine-1 (32 aa).

Positions 1–32 (PRRRRASSGRPVRRRRRPKMSRRRRRGGRRRR) are disordered.

Testis.

The protein resides in the nucleus. Its subcellular location is the chromosome. Its function is as follows. Protamines substitute for histones in the chromatin of sperm during the haploid phase of spermatogenesis. They compact sperm DNA into a highly condensed, stable and inactive complex. This Esox lucius (Northern pike) protein is Protamine-1.